The primary structure comprises 147 residues: Large ribosomal subunit protein uL15 (147 aa).

This sequence belongs to the universal ribosomal protein uL15 family. In terms of assembly, part of the 50S ribosomal subunit.

Binds to the 23S rRNA. This Blochmanniella floridana protein is Large ribosomal subunit protein uL15.